Here is a 313-residue protein sequence, read N- to C-terminus: Sideroflexin-4 (313 aa).

Transmembrane regions (helical) follow at residues 87–107 (AAFL…DTGI) and 141–161 (TLLG…PHLF). Lys-173 is subject to N6-acetyllysine. A run of 3 helical transmembrane segments spans residues 175 to 191 (TLPI…NVFA), 230 to 247 (AVLF…IHIF), and 269 to 289 (FFMM…IGQI).

This sequence belongs to the sideroflexin family. Largely restricted to kidney, brain and heart.

It is found in the mitochondrion inner membrane. Its function is as follows. Mitochondrial amino-acid transporter. Does not act as a serine transporter: not able to mediate transport of serine into mitochondria. This is Sideroflexin-4 from Mus musculus (Mouse).